The primary structure comprises 975 residues: Glycine dehydrogenase (decarboxylating) (975 aa).

Lys-723 carries the N6-(pyridoxal phosphate)lysine modification.

This sequence belongs to the GcvP family. As to quaternary structure, the glycine cleavage system is composed of four proteins: P, T, L and H. Pyridoxal 5'-phosphate is required as a cofactor.

The enzyme catalyses N(6)-[(R)-lipoyl]-L-lysyl-[glycine-cleavage complex H protein] + glycine + H(+) = N(6)-[(R)-S(8)-aminomethyldihydrolipoyl]-L-lysyl-[glycine-cleavage complex H protein] + CO2. Functionally, the glycine cleavage system catalyzes the degradation of glycine. The P protein binds the alpha-amino group of glycine through its pyridoxal phosphate cofactor; CO(2) is released and the remaining methylamine moiety is then transferred to the lipoamide cofactor of the H protein. The chain is Glycine dehydrogenase (decarboxylating) from Burkholderia thailandensis (strain ATCC 700388 / DSM 13276 / CCUG 48851 / CIP 106301 / E264).